The primary structure comprises 259 residues: Ribonuclease PH (259 aa).

Phosphate-binding positions include arginine 88 and 126–128 (GTR).

It belongs to the RNase PH family. In terms of assembly, homohexameric ring arranged as a trimer of dimers.

The enzyme catalyses tRNA(n+1) + phosphate = tRNA(n) + a ribonucleoside 5'-diphosphate. Its function is as follows. Phosphorolytic 3'-5' exoribonuclease that plays an important role in tRNA 3'-end maturation. Removes nucleotide residues following the 3'-CCA terminus of tRNAs; can also add nucleotides to the ends of RNA molecules by using nucleoside diphosphates as substrates, but this may not be physiologically important. Probably plays a role in initiation of 16S rRNA degradation (leading to ribosome degradation) during starvation. This chain is Ribonuclease PH, found in Mycobacterium leprae (strain Br4923).